A 239-amino-acid polypeptide reads, in one-letter code: Chlorate reductase subunit gamma (239 aa).

Positions 1 to 27 are cleaved as a signal peptide; that stretch reads MKTNILVKRMAVIGLAVAAACTGAAAA. His-74 and Met-138 together coordinate heme b.

As to quaternary structure, heterotrimer of alpha, beta and gamma subunits. Heme b serves as cofactor.

It localises to the periplasm. Its function is as follows. May transfer electrons to the iron-sulfur centers of ClrB. The chain is Chlorate reductase subunit gamma (clrC) from Ideonella dechloratans.